The primary structure comprises 1207 residues: MIDVNNFHYMKIGLASPEKIRSWSFGEVKKPETINYRTLKPEKDGLFCERIFGPTKDWECSCGKYKRVRYKGMVCDRCGVEVTKSKVRRERMGHIELAAPVSHIWYFKGIPSRMGLLLDMSPRALEEVIYFASYVVVDPGPTGLEKKTLLSEAEFRDYYDKYPGQFVAKMGAEGIKDLLEEIDLDEELKLLRDELESATGQRLTRAIKRLEVVESFRNSGNKPSWMILDVLPIIPPEIRPMVQLDGGRFATSDLNDLYRRVINRNNRLKRLLDLGAPGIIVQNEKRMLQEAVDALIDNGRRGRPVTGPGNRPLKSLSHMLKGKQGRFRQNLLGKRVDYSGRSVIAVGPSLKMYQCGLPKEMALELFKPFVMKELVQREIATNIKNAKSKIERMDDEVWDVLEEVIREHPVLLNRAPTLHRLGIQAFEPTLVEGRAIRLHPLVTTAYNADFDGDQMAVHVPLSKEAQAEARMLMLAAQNILNPKDGKPVVTPSQDMVLGNYYLTLERKDAVNTGAIFNNTNEVLKAYANGFVHLHTRIGVHASSFNNPTFTEEQNKKILATSVGKIIFNEIIPDSFAYINEPTQENLERKTPNRYFIDPTTLGEGGLKEYFENEELIEPFNKKFLGNIIAEVFNRFSITDTSMMLDRMKDLGFKFSSKAGITVGVADIVVLPDKQQILDEHEKLVDRITKQFNRGLITEEERYNAVVEIWTDAKDQIQGELMQSLDKTNPIFMMSDSGARGNASNFTQLAGMRGLMAAPSGKIIELPITSSFREGLTVLEYFISTHGARKGLADTALKTADSGYLTRRLVDVAQDVIVREEDCGTDRGLLVSDIKEGTEMIEPFIERIEGRYSKETIHHPETDEIIIRPDELITPEIAKKITDAGIEQMYIRSAFTCNARHGVCEKCYGKNLATGEKVEVGEAVGTIAAQSIGEPGTQLTMRTFHTGGVAGSDITQGLPRIQEIFEARNPKGQAVITEIEGVVEDIKLAKDRQQEIVVKGANETRSYLASGTSRIIVEIGQPVQRGEVLTEGSIEPKNYLSVAGLNATESYLLKEVQKVYRMQGVEIDDKHVEVMVRQMLRKVRIIEAGDTKLLPGSLVDIHNFTDANREAFKHRKRPATAKPVLLGITKASLETESFLSAASFQETTRVLTDAAIKGKRDDLLGLKENVIIGKLIPAGTGMRRYSDVKYEKTAKPVAEVESQTEVTE.

Residues Cys60, Cys62, Cys75, and Cys78 each coordinate Zn(2+). Residues Asp449, Asp451, and Asp453 each contribute to the Mg(2+) site. Zn(2+) contacts are provided by Cys822, Cys896, Cys903, and Cys906.

The protein belongs to the RNA polymerase beta' chain family. In terms of assembly, the RNAP catalytic core consists of 2 alpha, 1 beta, 1 beta' and 1 omega subunit. When a sigma factor is associated with the core the holoenzyme is formed, which can initiate transcription. It depends on Mg(2+) as a cofactor. Zn(2+) serves as cofactor.

It catalyses the reaction RNA(n) + a ribonucleoside 5'-triphosphate = RNA(n+1) + diphosphate. Its function is as follows. DNA-dependent RNA polymerase catalyzes the transcription of DNA into RNA using the four ribonucleoside triphosphates as substrates. In Staphylococcus aureus (strain USA300), this protein is DNA-directed RNA polymerase subunit beta'.